Consider the following 154-residue polypeptide: MCKMQLLSCIALSLVLVANSAPTTSSTKETQQQLEQLLLDLRLLLNGVNNYEDPKLSRMLTFKFYTPKKATELTHLQCLAEELKPLEEVLYLAQSKNFHLTDIKELMSNINVTLLKLKGSETRFKCEYDDETATITEFLNKWITFCQSIFSTLT.

Positions 1–20 are cleaved as a signal peptide; the sequence is MCKMQLLSCIALSLVLVANS. Thr-23 carries O-linked (GalNAc...) threonine glycosylation. Cys-78 and Cys-126 are disulfide-bonded.

It belongs to the IL-2 family.

It is found in the secreted. In terms of biological role, cytokine produced by activated CD4-positive helper T-cells and to a lesser extend activated CD8-positive T-cells and natural killer (NK) cells that plays pivotal roles in the immune response and tolerance. Binds to a receptor complex composed of either the high-affinity trimeric IL-2R (IL2RA/CD25, IL2RB/CD122 and IL2RG/CD132) or the low-affinity dimeric IL-2R (IL2RB and IL2RG). Interaction with the receptor leads to oligomerization and conformation changes in the IL-2R subunits resulting in downstream signaling starting with phosphorylation of JAK1 and JAK3. In turn, JAK1 and JAK3 phosphorylate the receptor to form a docking site leading to the phosphorylation of several substrates including STAT5. This process leads to activation of several pathways including STAT, phosphoinositide-3-kinase/PI3K and mitogen-activated protein kinase/MAPK pathways. Functions as a T-cell growth factor and can increase NK-cell cytolytic activity as well. Promotes strong proliferation of activated B-cells and subsequently immunoglobulin production. Plays a pivotal role in regulating the adaptive immune system by controlling the survival and proliferation of regulatory T-cells, which are required for the maintenance of immune tolerance. Moreover, participates in the differentiation and homeostasis of effector T-cell subsets, including Th1, Th2, Th17 as well as memory CD8-positive T-cells. This Mirounga angustirostris (Northern elephant seal) protein is Interleukin-2 (IL2).